Consider the following 58-residue polypeptide: UPF0391 membrane protein Sputcn32_1322 (58 aa).

The next 2 membrane-spanning stretches (helical) occupy residues 6-26 (LMFLVVAIIAGLFGFTGIAGA) and 28-48 (AGIAKIIFFLFIVLLVISLLV).

Belongs to the UPF0391 family.

It localises to the cell membrane. This chain is UPF0391 membrane protein Sputcn32_1322, found in Shewanella putrefaciens (strain CN-32 / ATCC BAA-453).